An 877-amino-acid chain; its full sequence is DNA polymerase I (877 aa).

The region spanning 177–270 is the 5'-3' exonuclease domain; the sequence is TPAQFIDLKA…LEDLVYSGPD (94 aa). The 3'-5' exonuclease domain occupies 302–465; the sequence is DFTIVDQISQ…TEPILLEKLS (164 aa).

It belongs to the DNA polymerase type-A family. As to quaternary structure, single-chain monomer with multiple functions.

It carries out the reaction DNA(n) + a 2'-deoxyribonucleoside 5'-triphosphate = DNA(n+1) + diphosphate. Its function is as follows. In addition to polymerase activity, this DNA polymerase exhibits 3'-5' and 5'-3' exonuclease activity. The chain is DNA polymerase I (polA) from Streptococcus pneumoniae (strain ATCC BAA-255 / R6).